The following is a 1104-amino-acid chain: Receptor-type guanylate cyclase gcy-15 (1104 aa).

Residues 1-431 lie on the Extracellular side of the membrane; that stretch reads MEIAINRLNA…ENCGPPANNT (431 aa). N-linked (GlcNAc...) asparagine glycans are attached at residues N43, N237, N263, N287, N407, and N429. The helical transmembrane segment at 432–452 threads the bilayer; it reads FIIVISVGVAVLIGLAIAAAF. At 453–1104 the chain is on the cytoplasmic side; the sequence is LYKRYRYERR…QIQEKTYEFS (652 aa). The region spanning 528-823 is the Protein kinase domain; sequence FNTGSTARAG…QIKRKLKPLT (296 aa). ATP-binding positions include 534-542 and K576; that span reads ARAGPFGPI. Residues 838–871 are a coiled coil; sequence IEKYTDKLEKDIAERNEELEAEKAKSEALLKMML. The 131-residue stretch at 894 to 1024 folds into the Guanylate cyclase domain; sequence TVFFSDCPGF…DTVNTASRME (131 aa).

The protein belongs to the adenylyl cyclase class-4/guanylyl cyclase family. Expressed bilaterally in ASG sensory neurons.

It localises to the cell membrane. It carries out the reaction GTP = 3',5'-cyclic GMP + diphosphate. In terms of biological role, guanylate cyclase involved in the production of the second messenger cGMP. The polypeptide is Receptor-type guanylate cyclase gcy-15 (Caenorhabditis elegans).